A 76-amino-acid polypeptide reads, in one-letter code: Exodeoxyribonuclease 7 small subunit (76 aa).

It belongs to the XseB family. In terms of assembly, heterooligomer composed of large and small subunits.

The protein localises to the cytoplasm. The catalysed reaction is Exonucleolytic cleavage in either 5'- to 3'- or 3'- to 5'-direction to yield nucleoside 5'-phosphates.. In terms of biological role, bidirectionally degrades single-stranded DNA into large acid-insoluble oligonucleotides, which are then degraded further into small acid-soluble oligonucleotides. The polypeptide is Exodeoxyribonuclease 7 small subunit (Geobacter metallireducens (strain ATCC 53774 / DSM 7210 / GS-15)).